The sequence spans 202 residues: Endothelin-1 (202 aa).

The signal sequence occupies residues 1 to 25 (MDYFPMIFALLFVAFQGAPEAAVLG). Positions 26–50 (TELSTGAESGGERPVPTTPWRPRRS) are excised as a propeptide. Residues 29-48 (STGAESGGERPVPTTPWRPR) form a disordered region. 2 cysteine pairs are disulfide-bonded: Cys-53–Cys-67 and Cys-55–Cys-63. Residues 74–202 (VNTPEHVVPY…DKKVIYSRAH (129 aa)) constitute a propeptide that is removed on maturation. Positions 110–124 (CQCASQTDKKCQNFC) are endothelin-like.

This sequence belongs to the endothelin/sarafotoxin family.

It localises to the secreted. Its function is as follows. Endothelins are endothelium-derived vasoconstrictor peptides. Probable ligand for G-protein coupled receptors EDNRA and EDNRB which activates PTK2B, BCAR1, BCAR3 and, GTPases RAP1 and RHOA cascade in glomerular mesangial cells. Also binds the DEAR/FBXW7-AS1 receptor. Promotes mesenteric arterial wall remodeling via activation of ROCK signaling and subsequent colocalization of NFATC3 with F-actin filaments. NFATC3 then translocates to the nucleus where it subsequently promotes the transcription of the smooth muscle hypertrophy and differentiation marker ACTA2. The chain is Endothelin-1 (EDN1) from Ovis aries (Sheep).